Reading from the N-terminus, the 156-residue chain is Small ribosomal subunit protein uS7 (156 aa).

Belongs to the universal ribosomal protein uS7 family. In terms of assembly, part of the 30S ribosomal subunit. Contacts proteins S9 and S11.

Its function is as follows. One of the primary rRNA binding proteins, it binds directly to 16S rRNA where it nucleates assembly of the head domain of the 30S subunit. Is located at the subunit interface close to the decoding center, probably blocks exit of the E-site tRNA. The chain is Small ribosomal subunit protein uS7 from Geobacillus sp. (strain WCH70).